We begin with the raw amino-acid sequence, 240 residues long: Keratinocyte-associated protein 3 (240 aa).

The next 4 membrane-spanning stretches (helical) occupy residues V21 to G41, V63 to S83, L95 to L115, and A163 to Y183.

Belongs to the TMEM54 family.

It localises to the membrane. The protein is Keratinocyte-associated protein 3 (KRTCAP3) of Bos taurus (Bovine).